An 817-amino-acid polypeptide reads, in one-letter code: Nuclear hormone receptor family member nhr-48 (817 aa).

A disordered region spans residues 49-91 (YNDDKDDPFYEDEGSGGGTSGGGKKSSRKRANTTSSSGGNEKE). Over residues 52-62 (DKDDPFYEDEG) the composition is skewed to acidic residues. Over residues 63–72 (SGGGTSGGGK) the composition is skewed to gly residues. A DNA-binding region (nuclear receptor) is located at residues 97–172 (NKVCRVCGDK…VGMKKEWIMS (76 aa)). 2 consecutive NR C4-type zinc fingers follow at residues 100–120 (CRVC…CESC) and 136–155 (CPFN…CQRC). Positions 202 to 212 (ACMEDESENSY) are enriched in acidic residues. 2 disordered regions span residues 202–221 (ACME…PSHQ) and 258–284 (MNFY…SSQL). Polar residues predominate over residues 273 to 284 (LPSNSCASSSQL).

It belongs to the nuclear hormone receptor family.

It localises to the nucleus. Functionally, orphan nuclear receptor. In Caenorhabditis elegans, this protein is Nuclear hormone receptor family member nhr-48 (nhr-48).